A 142-amino-acid polypeptide reads, in one-letter code: ATP synthase epsilon chain (142 aa).

Belongs to the ATPase epsilon chain family. In terms of assembly, F-type ATPases have 2 components, CF(1) - the catalytic core - and CF(0) - the membrane proton channel. CF(1) has five subunits: alpha(3), beta(3), gamma(1), delta(1), epsilon(1). CF(0) has three main subunits: a, b and c.

The protein localises to the cell inner membrane. Functionally, produces ATP from ADP in the presence of a proton gradient across the membrane. The chain is ATP synthase epsilon chain from Histophilus somni (strain 2336) (Haemophilus somnus).